The primary structure comprises 419 residues: Argininosuccinate synthase (419 aa).

Residues 9 to 17 and A35 contribute to the ATP site; that span reads AYSGGLDTS. L-citrulline is bound by residues Y86 and S91. 114–122 serves as a coordination point for ATP; it reads AHGATGKGN. T118, N122, and D123 together coordinate L-aspartate. N122 provides a ligand contact to L-citrulline. The L-citrulline site is built by R126, S179, S188, E270, and Y282.

The protein belongs to the argininosuccinate synthase family. Type 1 subfamily. In terms of assembly, homotetramer.

It carries out the reaction L-citrulline + L-aspartate + ATP = 2-(N(omega)-L-arginino)succinate + AMP + diphosphate + H(+). The protein operates within amino-acid biosynthesis; L-arginine biosynthesis; L-arginine from L-ornithine and carbamoyl phosphate: step 2/3. It functions in the pathway nitrogen metabolism; urea cycle; (N(omega)-L-arginino)succinate from L-aspartate and L-citrulline: step 1/1. This chain is Argininosuccinate synthase, found in Drosophila melanogaster (Fruit fly).